The sequence spans 144 residues: MRLNTLSPAPGRIHAKKRVGRGIGSGLGKTAGRGHKGLKSRSGGSVRPGFEGGQMPLQIRLPKYGFTSRISLVTAEIRLSELNAIEGSVVDIETLKQAGLISSVIKRAKIFASGEVKKAVTVKGLAVTKGAKAAIEAAGGKVEE.

Residues 24–52 (GSGLGKTAGRGHKGLKSRSGGSVRPGFEG) are disordered.

The protein belongs to the universal ribosomal protein uL15 family. As to quaternary structure, part of the 50S ribosomal subunit.

Functionally, binds to the 23S rRNA. The chain is Large ribosomal subunit protein uL15 from Cellvibrio japonicus (strain Ueda107) (Pseudomonas fluorescens subsp. cellulosa).